Here is a 313-residue protein sequence, read N- to C-terminus: Olfactory receptor 1G1 (313 aa).

Residues 1-25 are Extracellular-facing; sequence MEGKNLTSISEFFLLGFSEQLEEQK. The N-linked (GlcNAc...) asparagine glycan is linked to Asn-5. Residues 26–49 traverse the membrane as a helical segment; that stretch reads ALFGSFLFMYLVTVAGNLLIILVI. Residues 50–57 lie on the Cytoplasmic side of the membrane; that stretch reads ITDTQLHT. A helical membrane pass occupies residues 58-79; the sequence is PMYFFLANLSLADACFVSTTVP. At 80–100 the chain is on the extracellular side; the sequence is KMLANIQIQSQAISYSGCLLQ. An intrachain disulfide couples Cys-97 to Cys-189. Residues 101–120 form a helical membrane-spanning segment; that stretch reads LYFFMLFVMLEAFLLAVMAY. The Cytoplasmic segment spans residues 121–140; sequence DRYVAICHPLHYILIMSPGL. Residues 141–158 traverse the membrane as a helical segment; it reads CVFLVSASWIMNALHSLL. The Extracellular segment spans residues 159–196; sequence HTLLMNSLSFCANHEIPHFFCDIDPLLSLSCTDPFTNE. Residues 197–219 form a helical membrane-spanning segment; that stretch reads LVIFITGGLTGLVCVLCLIISYT. The Cytoplasmic portion of the chain corresponds to 220–236; the sequence is NIFSTILKIPSAQGKRK. The chain crosses the membrane as a helical span at residues 237–259; the sequence is AFSTCGSHLSVVSLFFGTSFCVY. Topologically, residues 260–272 are extracellular; that stretch reads FIPPSTRSAQKDT. Residues 273–292 traverse the membrane as a helical segment; that stretch reads VASVMYTVVTPMLNPFIYSL. The Cytoplasmic portion of the chain corresponds to 293–313; it reads RNQEIKSSLRKLIWVREIHSP.

The protein belongs to the G-protein coupled receptor 1 family.

It localises to the cell membrane. Its function is as follows. Odorant receptor. The sequence is that of Olfactory receptor 1G1 (OR1G1) from Gorilla gorilla gorilla (Western lowland gorilla).